We begin with the raw amino-acid sequence, 37 residues long: Large ribosomal subunit protein bL36 (37 aa).

This sequence belongs to the bacterial ribosomal protein bL36 family.

The protein is Large ribosomal subunit protein bL36 of Nostoc sp. (strain PCC 7120 / SAG 25.82 / UTEX 2576).